The sequence spans 185 residues: Photosystem I assembly protein Ycf4 (185 aa).

The next 2 helical transmembrane spans lie at 24–44 (YIIG…SISS) and 66–86 (IIMG…WYLV).

The protein belongs to the Ycf4 family.

The protein resides in the cellular thylakoid membrane. In terms of biological role, seems to be required for the assembly of the photosystem I complex. The protein is Photosystem I assembly protein Ycf4 of Prochlorococcus marinus (strain MIT 9301).